The chain runs to 344 residues: Protein Tob2 (344 aa).

Disordered regions lie at residues 144-169 (GSQD…FIPR) and 191-225 (MKKG…SPTN). The span at 145-164 (SQDSSLSNSPSPSFGQSPSP) shows a compositional bias: low complexity. Over residues 194–210 (GGGAASGGGVASSGAGG) the composition is skewed to gly residues. Residues 211–225 (QQPPQQPRMARSPTN) show a composition bias toward low complexity. A Phosphoserine modification is found at Ser254.

Belongs to the BTG family. Associates with CAF1. Ubiquitous.

The protein resides in the cytoplasm. Its function is as follows. Anti-proliferative protein inhibits cell cycle progression from the G0/G1 to S phases. The sequence is that of Protein Tob2 (TOB2) from Homo sapiens (Human).